The chain runs to 326 residues: Fructose-1,6-bisphosphatase class 1 (326 aa).

Mg(2+) contacts are provided by E90, D111, L113, and D114. Residues D114 to S117, Y222, and K253 each bind substrate. E259 lines the Mg(2+) pocket.

It belongs to the FBPase class 1 family. In terms of assembly, homotetramer. It depends on Mg(2+) as a cofactor.

The protein resides in the cytoplasm. It carries out the reaction beta-D-fructose 1,6-bisphosphate + H2O = beta-D-fructose 6-phosphate + phosphate. The protein operates within carbohydrate biosynthesis; gluconeogenesis. In Citrifermentans bemidjiense (strain ATCC BAA-1014 / DSM 16622 / JCM 12645 / Bem) (Geobacter bemidjiensis), this protein is Fructose-1,6-bisphosphatase class 1.